Here is a 254-residue protein sequence, read N- to C-terminus: Thiazole synthase (254 aa).

Lys-96 acts as the Schiff-base intermediate with DXP in catalysis. 1-deoxy-D-xylulose 5-phosphate contacts are provided by residues Gly-157, 183–184, and 205–206; these read AG and NT.

Belongs to the ThiG family. In terms of assembly, homotetramer. Forms heterodimers with either ThiH or ThiS.

Its subcellular location is the cytoplasm. The enzyme catalyses [ThiS sulfur-carrier protein]-C-terminal-Gly-aminoethanethioate + 2-iminoacetate + 1-deoxy-D-xylulose 5-phosphate = [ThiS sulfur-carrier protein]-C-terminal Gly-Gly + 2-[(2R,5Z)-2-carboxy-4-methylthiazol-5(2H)-ylidene]ethyl phosphate + 2 H2O + H(+). The protein operates within cofactor biosynthesis; thiamine diphosphate biosynthesis. Catalyzes the rearrangement of 1-deoxy-D-xylulose 5-phosphate (DXP) to produce the thiazole phosphate moiety of thiamine. Sulfur is provided by the thiocarboxylate moiety of the carrier protein ThiS. In vitro, sulfur can be provided by H(2)S. The chain is Thiazole synthase from Bacillus velezensis (strain DSM 23117 / BGSC 10A6 / LMG 26770 / FZB42) (Bacillus amyloliquefaciens subsp. plantarum).